The following is a 223-amino-acid chain: Alpha-enolase (223 aa).

S8 contacts Mg(2+). Y12 carries the post-translational modification Phosphotyrosine. N6-acetyllysine is present on K25. E39 provides a ligand contact to substrate. Position 61 is an N6-acetyllysine (K61). E69 acts as the Proton donor in catalysis. N6-acetyllysine; alternate is present on K87. N6-malonyllysine; alternate is present on K87. K87 carries the post-translational modification N6-succinyllysine; alternate. Residues D99 and D119 each coordinate Mg(2+). Position 119 (D119) interacts with substrate. N6-acetyllysine occurs at positions 133 and 141. The active-site Proton acceptor is K141. Residues S168–S171 and K192 each bind substrate. Residues Y202–K223 form a required for interaction with PLG region. K215 is subject to N6-acetyllysine; alternate. At K215 the chain carries N6-malonyllysine; alternate. K215 is modified (N6-succinyllysine; alternate).

The protein belongs to the enolase family. As to quaternary structure, mammalian enolase is composed of 3 isozyme subunits, alpha, beta and gamma, which can form homodimers or heterodimers which are cell-type and development-specific. ENO1 interacts with PLG in the neuronal plasma membrane and promotes its activation. The C-terminal lysine is required for this binding. Interacts with ENO4 and PGAM2. Interacts with CMTM6. Mg(2+) is required as a cofactor. Post-translationally, ISGylated. In terms of processing, lysine 2-hydroxyisobutyrylation (Khib) by p300/EP300 activates the phosphopyruvate hydratase activity.

The protein resides in the cytoplasm. It is found in the cell membrane. The enzyme catalyses (2R)-2-phosphoglycerate = phosphoenolpyruvate + H2O. It functions in the pathway carbohydrate degradation; glycolysis; pyruvate from D-glyceraldehyde 3-phosphate: step 4/5. In terms of biological role, glycolytic enzyme the catalyzes the conversion of 2-phosphoglycerate to phosphoenolpyruvate. In addition to glycolysis, involved in various processes such as growth control, hypoxia tolerance and allergic responses. May also function in the intravascular and pericellular fibrinolytic system due to its ability to serve as a receptor and activator of plasminogen on the cell surface of several cell-types such as leukocytes and neurons. Stimulates immunoglobulin production. In Mesocricetus auratus (Golden hamster), this protein is Alpha-enolase.